The sequence spans 129 residues: Acyl carrier protein 2, chloroplastic (129 aa).

A chloroplast-targeting transit peptide spans 1 to 49 (MASAAASAVSFARPVKAICVNSVSFSALRKDNVSFRLQPVPQRFSVCCA). Positions 52–127 (KETVEKVCDI…DAANLIDSLV (76 aa)) constitute a Carrier domain. Ser87 is subject to O-(pantetheine 4'-phosphoryl)serine.

It belongs to the acyl carrier protein (ACP) family. Post-translationally, 4'-phosphopantetheine is transferred from CoA to a specific serine of apo-ACP by acpS. This modification is essential for activity because fatty acids are bound in thioester linkage to the sulfhydryl of the prosthetic group.

It is found in the plastid. The protein localises to the chloroplast. It participates in lipid metabolism; fatty acid biosynthesis. Functionally, carrier of the growing fatty acid chain in fatty acid biosynthesis. The chain is Acyl carrier protein 2, chloroplastic (ACL1.2) from Hordeum vulgare (Barley).